Reading from the N-terminus, the 261-residue chain is MASVESRIIAITGGASGIGAATCRLLAERGAAVLCVCDISPKNFDDLKISIKKINPSTKVHCATVDVTSSVEVRQWIEGIISDFGDLHGAVNAAGIAQGAGMRNTPTIAEEVDEEWTRIMNTNLNGVFYCTREEVRAMKGLPATDRSIVNVGSIASVSHMPDVYAYGTSKGACAYFTTCVAADAFPLGIRINNVSPGVTNTPMLPQFAPMAKTFEEIEESYKKEGLSLIEAEDVARTIVWLLSEDSRPVFGANINVGACMP.

The NADP(+) site is built by Ile-18, Lys-48, Asp-66, Arg-132, Tyr-166, Lys-170, and Thr-201. Tyr-166 serves as the catalytic Proton donor. Catalysis depends on Lys-170, which acts as the Lowers pKa of active site Tyr.

It belongs to the short-chain dehydrogenases/reductases (SDR) family.

The enzyme catalyses chanoclavine-I + NAD(+) = chanoclavine-I aldehyde + NADH + H(+). The protein operates within alkaloid biosynthesis; ergot alkaloid biosynthesis. Functionally, chanoclavine-I dehydrogenase; part of the gene cluster that mediates the biosynthesis of fumiclavanine C, a fungal ergot alkaloid. DmaW catalyzes the first step of ergot alkaloid biosynthesis by condensing dimethylallyl diphosphate (DMAP) and tryptophan to form 4-dimethylallyl-L-tryptophan. The second step is catalyzed by the methyltransferase easF that methylates 4-dimethylallyl-L-tryptophan in the presence of S-adenosyl-L-methionine, resulting in the formation of 4-dimethylallyl-L-abrine. The catalase easC and the FAD-dependent oxidoreductase easE then transform 4-dimethylallyl-L-abrine to chanoclavine-I which is further oxidized by EasD in the presence of NAD(+), resulting in the formation of chanoclavine-I aldehyde. EasA reduces chanoclavine-I aldehyde to dihydrochanoclavine-I aldehyde that spontaneously dehydrates to form 6,8-dimethyl-6,7-didehydroergoline. EasG then catalyzes the reduction of 6,8-dimethyl-6,7-didehydroergoline to form festuclavine. Hydrolysis of festuclavine by easM then leads to the formation of fumigaclavine B which is in turn acetylated by easN to fumigaclavine A. Finally, easL catalyzes the conversion of fumigaclavine A into fumigaclavine C by attaching a dimethylallyl moiety to C-2 of the indole nucleus. The sequence is that of Chanoclavine-I dehydrogenase easD from Aspergillus fumigatus (strain ATCC MYA-4609 / CBS 101355 / FGSC A1100 / Af293) (Neosartorya fumigata).